The chain runs to 401 residues: Tyrosine--tRNA ligase (401 aa).

Positions 43–52 (PTAPDLHLGH) match the 'HIGH' region motif. The 'KMSKS' region signature appears at 227 to 231 (KMSKS). Lys-230 serves as a coordination point for ATP. The S4 RNA-binding domain maps to 338-399 (MAIGNVLKEA…GKRRFAKINL (62 aa)).

Belongs to the class-I aminoacyl-tRNA synthetase family. TyrS type 2 subfamily. Homodimer.

It localises to the cytoplasm. The catalysed reaction is tRNA(Tyr) + L-tyrosine + ATP = L-tyrosyl-tRNA(Tyr) + AMP + diphosphate + H(+). Catalyzes the attachment of tyrosine to tRNA(Tyr) in a two-step reaction: tyrosine is first activated by ATP to form Tyr-AMP and then transferred to the acceptor end of tRNA(Tyr). The polypeptide is Tyrosine--tRNA ligase (Idiomarina loihiensis (strain ATCC BAA-735 / DSM 15497 / L2-TR)).